A 1242-amino-acid polypeptide reads, in one-letter code: Structural polyprotein (1242 aa).

The tract at residues 1–36 (MFPYPTLNYSPMAPVNPMAYRDPNPPRRRWRPFRPP) is necessary for nucleocapsid assembly and virus assembly. A disordered region spans residues 1–104 (MFPYPTLNYS…KQKPGKRQRM (104 aa)). Positions 37 to 70 (LAAQIEDLRRSIANLTFKQRAPNPPAGPPAKRKK) are host transcription inhibition. The Supraphysiological nuclear export signal signature appears at 44-51 (LRRSIANL). The span at 66–104 (AKRKKPAPKPKPAAPKKKRQPPPAKKQKRKQKPGKRQRM) shows a compositional bias: basic residues. The short motif at 67–70 (KRKK) is the Nuclear localization signal element. The binding to the viral RNA stretch occupies residues 83–113 (KRQPPPAKKQKRKQKPGKRQRMCMKLESDKT). The segment at 98–112 (PGKRQRMCMKLESDK) is ribosome-binding. At Ser110 the chain carries Phosphoserine. The 150-residue stretch at 112-261 (KTFPILLNGQ…KDTPEGSEPW (150 aa)) folds into the Peptidase S3 domain. Phosphothreonine is present on Thr113. Active-site charge relay system residues include His138, Asp160, and Ser212. The segment at 262 to 273 (SLTTVMCVLANI) is functions as an uncleaved signal peptide for the precursor of protein E3/E2. Asn272 is a glycosylation site (N-linked (GlcNAc...) asparagine; by host). The Extracellular portion of the chain corresponds to 325–688 (DLETHFTQYK…YYYNRYPMTT (364 aa)). A helical membrane pass occupies residues 689–709 (IVGLCTCAAIIMVSCITSVWL). The Cytoplasmic portion of the chain corresponds to 710–744 (LCRTRNLCITPYRLAPNAQVPILLAVLCCVKPTRA). S-palmitoyl cysteine; by host attachment occurs at residues Cys717, Cys737, and Cys738. The interval 717 to 737 (CITPYRLAPNAQVPILLAVLC) is transient transmembrane before p62-6K protein processing. The Extracellular segment spans residues 745 to 759 (DDTLQVLNYLWNNNQ). 2 helical membrane-spanning segments follow: residues 760–780 (NFFW…MRML) and 781–801 (RCLL…GAAA). Over 802 to 1218 (YEHTAVMPNK…WSWLKVLVGS (417 aa)) the chain is Extracellular. 8 disulfide bridges follow: Cys850–Cys915, Cys863–Cys895, Cys864–Cys897, Cys869–Cys879, Cys1061–Cys1073, Cys1103–Cys1178, Cys1108–Cys1182, and Cys1130–Cys1172. An E1 fusion peptide loop region spans residues 885–902 (VYPFMWGGAYCFCDTENT). The chain crosses the membrane as a helical span at residues 1219–1239 (TSAFIVLGLIATAVVALVLFT). Residues 1240–1242 (HKH) lie on the Cytoplasmic side of the membrane.

Part of a tetrameric complex composed of host CRM1, host importin alpha/beta dimer and the viral capsid; this complex blocks the receptor-mediated transport through the nuclear pore. Interacts with host phosphatase PPP1CA; this interaction dephosphorylates the capsid protein, which increases its ability to bind to the viral genome. Interacts with host karyopherin KPNA4; this interaction allows the nuclear import of the viral capsid protein. Interacts with spike glycoprotein E2. Interacts with host IRAK1; the interaction leads to inhibition of IRAK1-dependent signaling. As to quaternary structure, the precursor of protein E3/E2 and E1 form a heterodimer shortly after synthesis. In terms of assembly, the precursor of protein E3/E2 and E1 form a heterodimer shortly after synthesis. Processing of the precursor of protein E3/E2 into E2 and E3 results in a heterodimer of the spike glycoproteins E2 and E1. Spike at virion surface are constituted of three E2-E1 heterodimers. After target cell attachment and endocytosis, E1 change conformation to form homotrimers. Interacts with 6K protein. Processing of the precursor of protein E3/E2 into E2 and E3 results in a heterodimer of the spike glycoproteins E2 and E1. Spike at virion surface are constituted of three E2-E1 heterodimers. Interacts with 6K protein. As to quaternary structure, interacts with spike glycoprotein E1. Interacts with spike glycoprotein E2. Post-translationally, structural polyprotein: Specific enzymatic cleavages in vivo yield mature proteins. Capsid protein is auto-cleaved during polyprotein translation, unmasking a signal peptide at the N-terminus of the precursor of E3/E2. The remaining polyprotein is then targeted to the host endoplasmic reticulum, where host signal peptidase cleaves it into pE2, 6K and E1 proteins. pE2 is further processed to mature E3 and E2 by host furin in trans-Golgi vesicle. Phosphorylated on serine and threonine residues. In terms of processing, palmitoylated via thioester bonds. These palmitoylations may induce disruption of the C-terminus transmembrane. This would result in the reorientation of E2 C-terminus from lumenal to cytoplasmic side. Post-translationally, N-glycosylated. Palmitoylated via thioester bonds.

The protein resides in the virion. Its subcellular location is the host cytoplasm. The protein localises to the host cell membrane. It is found in the host nucleus. It localises to the virion membrane. It catalyses the reaction Autocatalytic release of the core protein from the N-terminus of the togavirus structural polyprotein by hydrolysis of a -Trp-|-Ser- bond.. In terms of biological role, forms an icosahedral capsid with a T=4 symmetry composed of 240 copies of the capsid protein surrounded by a lipid membrane through which penetrate 80 spikes composed of trimers of E1-E2 heterodimers. The capsid protein binds to the viral RNA genome at a site adjacent to a ribosome binding site for viral genome translation following genome release. Possesses a protease activity that results in its autocatalytic cleavage from the nascent structural protein. Following its self-cleavage, the capsid protein transiently associates with ribosomes, and within several minutes the protein binds to viral RNA and rapidly assembles into icosahedric core particles. The resulting nucleocapsid eventually associates with the cytoplasmic domain of the spike glycoprotein E2 at the cell membrane, leading to budding and formation of mature virions. In case of infection, new virions attach to target cells and after clathrin-mediated endocytosis their membrane fuses with the host endosomal membrane. This leads to the release of the nucleocapsid into the cytoplasm, followed by an uncoating event necessary for the genomic RNA to become accessible. The uncoating might be triggered by the interaction of capsid proteins with ribosomes. Binding of ribosomes would release the genomic RNA since the same region is genomic RNA-binding and ribosome-binding. Specifically inhibits interleukin-1 receptor-associated kinase 1/IRAK1-dependent signaling during viral entry, representing a means by which the alphaviruses may evade innate immune detection and activation prior to viral gene expression. Inhibits host transcription. Forms a tetrameric complex with XPO1/CRM1 and the nuclear import receptor importin. This complex blocks the central channel of host nuclear pores thereby inhibiting the receptor-mediated nuclear transport and thus the host mRNA and rRNA transcription. The inhibition of transcription is linked to a cytopathic effect on the host cell. Functionally, provides the signal sequence for the translocation of the precursor of protein E3/E2 to the host endoplasmic reticulum. Furin-cleaved E3 remains associated with spike glycoprotein E1 and mediates pH protection of the latter during the transport via the secretory pathway. After virion release from the host cell, the assembly protein E3 is gradually released in the extracellular space. Its function is as follows. Plays a role in viral attachment to target host cell, by binding to the cell receptor. Synthesized as a p62 precursor which is processed by furin at the cell membrane just before virion budding, giving rise to E2-E1 heterodimer. The p62-E1 heterodimer is stable, whereas E2-E1 is unstable and dissociate at low pH. p62 is processed at the last step, presumably to avoid E1 fusion activation before its final export to cell surface. E2 C-terminus contains a transitory transmembrane that would be disrupted by palmitoylation, resulting in reorientation of the C-terminal tail from lumenal to cytoplasmic side. This step is critical since E2 C-terminus is involved in budding by interacting with capsid proteins. This release of E2 C-terminus in cytoplasm occurs lately in protein export, and precludes premature assembly of particles at the endoplasmic reticulum membrane. Constitutive membrane protein involved in virus glycoprotein processing, cell permeabilization, and the budding of viral particles. Disrupts the calcium homeostasis of the cell, probably at the endoplasmic reticulum level. This leads to cytoplasmic calcium elevation. Because of its lipophilic properties, the 6K protein is postulated to influence the selection of lipids that interact with the transmembrane domains of the glycoproteins, which, in turn, affects the deformability of the bilayer required for the extreme curvature that occurs as budding proceeds. Present in low amount in virions, about 3% compared to viral glycoproteins. In terms of biological role, class II viral fusion protein. Fusion activity is inactive as long as E1 is bound to E2 in mature virion. After virus attachment to target cell and endocytosis, acidification of the endosome would induce dissociation of E1/E2 heterodimer and concomitant trimerization of the E1 subunits. This E1 trimer is fusion active, and promotes release of viral nucleocapsid in cytoplasm after endosome and viral membrane fusion. Efficient fusion requires the presence of cholesterol and sphingolipid in the target membrane. Fusion is optimal at levels of about 1 molecule of cholesterol per 2 molecules of phospholipids, and is specific for sterols containing a 3-beta-hydroxyl group. The polypeptide is Structural polyprotein (Aedes (Human)).